The chain runs to 186 residues: MKIAQELRVGNVFMIGSDPMVVQKAEYNKSGRNAAVVKMKYKNLLTEAPGESVFKADDKFEVVVLERRECTYSYFADPMYVFMDTEYNQYEVEKDSMGDSLNYLEDGMVVEVVFYNDKAISVEMPTTLVREIIYTEPAVKGDTSSGKVLKGAKINTGFELQVPLFCNIGDKIEIDTRTGEYRSRAN.

It belongs to the elongation factor P family.

The protein resides in the cytoplasm. It functions in the pathway protein biosynthesis; polypeptide chain elongation. In terms of biological role, involved in peptide bond synthesis. Stimulates efficient translation and peptide-bond synthesis on native or reconstituted 70S ribosomes in vitro. Probably functions indirectly by altering the affinity of the ribosome for aminoacyl-tRNA, thus increasing their reactivity as acceptors for peptidyl transferase. The polypeptide is Elongation factor P (Cupriavidus metallidurans (strain ATCC 43123 / DSM 2839 / NBRC 102507 / CH34) (Ralstonia metallidurans)).